We begin with the raw amino-acid sequence, 176 residues long: Xanthine-guanine phosphoribosyltransferase (176 aa).

Residues 51–52 (RG) and 110–118 (DDLVDTGKT) each bind 5-phospho-alpha-D-ribose 1-diphosphate. A Mg(2+)-binding site is contributed by aspartate 111. The guanine site is built by aspartate 114 and isoleucine 157. Residues aspartate 114 and isoleucine 157 each coordinate xanthine. GMP-binding positions include 114–118 (DTGKT) and 156–157 (WI).

It belongs to the purine/pyrimidine phosphoribosyltransferase family. XGPT subfamily. As to quaternary structure, homotetramer. The cofactor is Mg(2+).

It localises to the cell inner membrane. The catalysed reaction is GMP + diphosphate = guanine + 5-phospho-alpha-D-ribose 1-diphosphate. It carries out the reaction XMP + diphosphate = xanthine + 5-phospho-alpha-D-ribose 1-diphosphate. The enzyme catalyses IMP + diphosphate = hypoxanthine + 5-phospho-alpha-D-ribose 1-diphosphate. It participates in purine metabolism; GMP biosynthesis via salvage pathway; GMP from guanine: step 1/1. It functions in the pathway purine metabolism; XMP biosynthesis via salvage pathway; XMP from xanthine: step 1/1. Functionally, purine salvage pathway enzyme that catalyzes the transfer of the ribosyl-5-phosphate group from 5-phospho-alpha-D-ribose 1-diphosphate (PRPP) to the N9 position of the 6-oxopurines guanine and xanthine to form the corresponding ribonucleotides GMP (guanosine 5'-monophosphate) and XMP (xanthosine 5'-monophosphate), with the release of PPi. To a lesser extent, also acts on hypoxanthine. This is Xanthine-guanine phosphoribosyltransferase from Bradyrhizobium diazoefficiens (strain JCM 10833 / BCRC 13528 / IAM 13628 / NBRC 14792 / USDA 110).